Consider the following 187-residue polypeptide: Phosphoheptose isomerase (187 aa).

The SIS domain occupies cysteine 34 to phenylalanine 187. Asparagine 49–glycine 51 contacts substrate. Histidine 58 and glutamate 62 together coordinate Zn(2+). Substrate is bound by residues glutamate 62, asparagine 91 to aspartate 92, serine 117 to serine 119, serine 122, and glutamine 169. Zn(2+) is bound by residues glutamine 169 and histidine 177.

This sequence belongs to the SIS family. GmhA subfamily. As to quaternary structure, homotetramer. Requires Zn(2+) as cofactor.

It localises to the cytoplasm. The catalysed reaction is 2 D-sedoheptulose 7-phosphate = D-glycero-alpha-D-manno-heptose 7-phosphate + D-glycero-beta-D-manno-heptose 7-phosphate. The protein operates within carbohydrate biosynthesis; D-glycero-D-manno-heptose 7-phosphate biosynthesis; D-glycero-alpha-D-manno-heptose 7-phosphate and D-glycero-beta-D-manno-heptose 7-phosphate from sedoheptulose 7-phosphate: step 1/1. In terms of biological role, catalyzes the isomerization of sedoheptulose 7-phosphate in D-glycero-D-manno-heptose 7-phosphate. This is Phosphoheptose isomerase from Nitratiruptor sp. (strain SB155-2).